The following is a 219-amino-acid chain: Mucosal pentraxin (219 aa).

The signal sequence occupies residues 1–19 (MEKLIVGILFLSVLSGSVA). Residues 24-219 (KGKAFIFPQE…YVVIKPKLWP (196 aa)) form the Pentraxin (PTX) domain. An N-linked (GlcNAc...) asparagine glycan is attached at N51. A disulfide bridge connects residues C55 and C114. D77, N78, E155, Q156, D157, and Q167 together coordinate Ca(2+).

This sequence belongs to the pentraxin family. Homopentamer. Pentraxin (or pentaxin) have a discoid arrangement of 5 non-covalently bound subunits. It depends on Ca(2+) as a cofactor. As to expression, expressed in colon.

Its subcellular location is the secreted. In Mus musculus (Mouse), this protein is Mucosal pentraxin (Mptx1).